The following is a 195-amino-acid chain: HTH-type transcriptional regulator BetI (195 aa).

An HTH tetR-type domain is found at 8-68 (SIRRRQLIDA…ATMRDITSQL (61 aa)). A DNA-binding region (H-T-H motif) is located at residues 31 to 50 (TIAQIARRAGVSTGIISHYF).

It participates in amine and polyamine biosynthesis; betaine biosynthesis via choline pathway [regulation]. Repressor involved in the biosynthesis of the osmoprotectant glycine betaine. It represses transcription of the choline transporter BetT and the genes of BetAB involved in the synthesis of glycine betaine. This chain is HTH-type transcriptional regulator BetI, found in Escherichia coli (strain SMS-3-5 / SECEC).